Consider the following 119-residue polypeptide: Large ribosomal subunit protein bL20 (119 aa).

Belongs to the bacterial ribosomal protein bL20 family.

In terms of biological role, binds directly to 23S ribosomal RNA and is necessary for the in vitro assembly process of the 50S ribosomal subunit. It is not involved in the protein synthesizing functions of that subunit. This is Large ribosomal subunit protein bL20 from Herminiimonas arsenicoxydans.